The primary structure comprises 306 residues: Serine/threonine-protein phosphatase PP-X homolog 4 (306 aa).

Residues Asp53, His55, Asp81, and Asn113 each coordinate Mn(2+). Catalysis depends on His114, which acts as the Proton donor. Positions 163 and 237 each coordinate Mn(2+).

The protein belongs to the PPP phosphatase family. PP-4 (PP-X) subfamily. The cofactor is Mn(2+).

It catalyses the reaction O-phospho-L-seryl-[protein] + H2O = L-seryl-[protein] + phosphate. It carries out the reaction O-phospho-L-threonyl-[protein] + H2O = L-threonyl-[protein] + phosphate. The polypeptide is Serine/threonine-protein phosphatase PP-X homolog 4 (Ppx4) (Paramecium tetraurelia).